The sequence spans 427 residues: Terminal nucleotidyltransferase 5B (427 aa).

The segment covering 1–11 (MMPSESGDESL) has biased composition (acidic residues). Residues 1–46 (MMPSESGDESLEQPAAQVGTGAASAVATAGAAGGGPDLEASSASLG) are disordered. Residues 15–30 (AAQVGTGAASAVATAG) show a composition bias toward low complexity.

Belongs to the TENT family.

The protein localises to the cytoplasm. The protein resides in the nucleus. It catalyses the reaction RNA(n) + ATP = RNA(n)-3'-adenine ribonucleotide + diphosphate. Functionally, catalyzes the transfer of one adenosine molecule from an ATP to an mRNA poly(A) tail bearing a 3'-OH terminal group in an ATP hydrolysis-dependent manner. May be involved in maintaining the translation efficiency of at least some genes through preventing degradation of their mRNAs. Prefers RNA molecules that are adenosine-rich close to 3'-end. In addition, may inhibit cell proliferation and cell cycle progression through ubiquitination of beta-catenin/CTNNB1. The protein is Terminal nucleotidyltransferase 5B of Rattus norvegicus (Rat).